We begin with the raw amino-acid sequence, 495 residues long: Lysine--tRNA ligase (495 aa).

Positions 406 and 413 each coordinate Mg(2+).

The protein belongs to the class-II aminoacyl-tRNA synthetase family. Homodimer. Mg(2+) is required as a cofactor.

It is found in the cytoplasm. The catalysed reaction is tRNA(Lys) + L-lysine + ATP = L-lysyl-tRNA(Lys) + AMP + diphosphate. The sequence is that of Lysine--tRNA ligase from Leuconostoc mesenteroides subsp. mesenteroides (strain ATCC 8293 / DSM 20343 / BCRC 11652 / CCM 1803 / JCM 6124 / NCDO 523 / NBRC 100496 / NCIMB 8023 / NCTC 12954 / NRRL B-1118 / 37Y).